Here is a 114-residue protein sequence, read N- to C-terminus: MNQYETVFILTPVLSDVQMKEAVEKFKGILQAEGAEIINEENWGLKKLAYPIQKKSTGFYQLVEFNADPTVIDKLELNFRRDERVIRFLTFKMDKYAAEYAAKRRSVKSNKKED.

This sequence belongs to the bacterial ribosomal protein bS6 family.

Its function is as follows. Binds together with bS18 to 16S ribosomal RNA. The polypeptide is Small ribosomal subunit protein bS6 (Bacteroides thetaiotaomicron (strain ATCC 29148 / DSM 2079 / JCM 5827 / CCUG 10774 / NCTC 10582 / VPI-5482 / E50)).